Here is a 115-residue protein sequence, read N- to C-terminus: Large ribosomal subunit protein bL20 (115 aa).

Belongs to the bacterial ribosomal protein bL20 family.

Functionally, binds directly to 23S ribosomal RNA and is necessary for the in vitro assembly process of the 50S ribosomal subunit. It is not involved in the protein synthesizing functions of that subunit. This Prochlorococcus marinus (strain MIT 9303) protein is Large ribosomal subunit protein bL20.